A 375-amino-acid chain; its full sequence is Pulmonary surfactant-associated protein D (375 aa).

Residues 1 to 21 form the signal peptide; it reads MLLFLLSALVLLTQSLGYLEA. S-nitrosocysteine is present on residues Cys-35 and Cys-40. Residues 43-221 form a disordered region; sequence VESGLPGRDG…DKGAKGESGL (179 aa). One can recognise a Collagen-like domain in the interval 46–222; the sequence is GLPGRDGRDG…KGAKGESGLP (177 aa). A compositionally biased stretch (basic and acidic residues) spans 50–65; the sequence is RDGRDGREGPRGEKGD. Position 78 is a 4-hydroxyproline (Pro-78). Lys-87 is subject to 5-hydroxylysine. Asn-90 carries an N-linked (GlcNAc...) asparagine glycan. Residue Pro-96 is modified to 4-hydroxyproline. The residue at position 99 (Lys-99) is a 5-hydroxylysine. The span at 105–114 shows a compositional bias: pro residues; the sequence is SGPPGPPGVP. Composition is skewed to low complexity over residues 116-132 and 138-150; these read PAGREGPLGKQGNIGPQ and KGEAGPKGEVGAP. Residues Pro-171 and Pro-177 each carry the 4-hydroxyproline modification. Over residues 173–189 the composition is skewed to low complexity; sequence ERGAPGNAGAAGSAGVM. Positions 204-216 are enriched in basic and acidic residues; it reads KGDKGVPGDKGAK. Positions 223–251 form a coiled coil; it reads DVASLRQQVEALQKQVQHLQAAFSQYKKV. Residues 260–374 form the C-type lectin domain; that stretch reads VGEKIFKTAG…CGEKRLVVCE (115 aa). 2 cysteine pairs are disulfide-bonded: Cys-281/Cys-373 and Cys-351/Cys-365.

The protein belongs to the SFTPD family. As to quaternary structure, oligomeric complex of 4 set of homotrimers. In terms of processing, hydroxylation on proline residues within the sequence motif, GXPG, is most likely to be 4-hydroxy as this fits the requirement for 4-hydroxylation in vertebrates. Post-translationally, S-nitrosylation at Cys-35 and Cys-40 alters the quaternary structure which results in a pro-inflammatory chemoattractive signaling activity with macrophages.

It is found in the secreted. Its subcellular location is the extracellular space. The protein resides in the extracellular matrix. The protein localises to the surface film. Functionally, contributes to the lung's defense against inhaled microorganisms, organic antigens and toxins. Interacts with compounds such as bacterial lipopolysaccharides, oligosaccharides and fatty acids and modulates leukocyte action in immune response. May participate in the extracellular reorganization or turnover of pulmonary surfactant. Binds strongly maltose residues and to a lesser extent other alpha-glucosyl moieties. The chain is Pulmonary surfactant-associated protein D (SFTPD) from Macaca mulatta (Rhesus macaque).